A 387-amino-acid polypeptide reads, in one-letter code: 1-hydroxy-2-naphthoate 1,2-dioxygenasee (387 aa).

Cupin type-2 domains follow at residues 103 to 171 and 271 to 337; these read FQLV…VWLD and VQRL…VLLF.

Homohexamer. It depends on Fe(2+) as a cofactor.

The catalysed reaction is 1-hydroxy-2-naphthoate + O2 = (3Z)-4-(2-carboxyphenyl)-2-oxobut-3-enoate + H(+). Its function is as follows. Dioxygenase involved in phenanthrene catabolism by mediating cleavage of 1-hydroxy-2-naphthoate. The chain is 1-hydroxy-2-naphthoate 1,2-dioxygenasee (phdI) from Nocardioides sp. (strain KP7).